Consider the following 225-residue polypeptide: Cytidylate kinase (225 aa).

11–19 is a binding site for ATP; it reads GPAAAGKST.

The protein belongs to the cytidylate kinase family. Type 1 subfamily.

Its subcellular location is the cytoplasm. The enzyme catalyses CMP + ATP = CDP + ADP. It carries out the reaction dCMP + ATP = dCDP + ADP. This is Cytidylate kinase from Bacillus cereus (strain ATCC 10987 / NRS 248).